A 308-amino-acid chain; its full sequence is Apolipoprotein F (308 aa).

It belongs to the apolipoprotein F family.

The protein localises to the secreted. Functionally, minor apolipoprotein that associates with LDL. Inhibits cholesteryl ester transfer protein (CETP) activity and appears to be an important regulator of cholesterol transport. Also associates to a lesser degree with VLDL, Apo-AI and Apo-AII. The sequence is that of Apolipoprotein F (Apof) from Rattus norvegicus (Rat).